A 353-amino-acid chain; its full sequence is ATP-dependent kinase YFH7 (353 aa).

Residue 31–39 participates in ATP binding; the sequence is GSPGSGKST.

Belongs to the YFH7 family.

In terms of biological role, ATP-dependent kinase that could be involved in endoplasmic reticulum membrane assembly. The protein is ATP-dependent kinase YFH7 (YFH7) of Saccharomyces cerevisiae (strain JAY291) (Baker's yeast).